Here is a 156-residue protein sequence, read N- to C-terminus: Cellulose synthase operon protein D (156 aa).

Its pathway is glycan metabolism; bacterial cellulose biosynthesis. Its function is as follows. May have a major role in the perfection of crystallization, involved either in the pore structure itself or in the organization of the pores within the linear array of terminal synthesizing complexes (TCs). This Komagataeibacter xylinus (Gluconacetobacter xylinus) protein is Cellulose synthase operon protein D (acsD).